A 300-amino-acid chain; its full sequence is Acetylglutamate kinase (300 aa).

Residues 73 to 74 (GG), R95, and N197 each bind substrate.

The protein belongs to the acetylglutamate kinase family. ArgB subfamily.

It localises to the cytoplasm. It carries out the reaction N-acetyl-L-glutamate + ATP = N-acetyl-L-glutamyl 5-phosphate + ADP. It functions in the pathway amino-acid biosynthesis; L-arginine biosynthesis; N(2)-acetyl-L-ornithine from L-glutamate: step 2/4. Its function is as follows. Catalyzes the ATP-dependent phosphorylation of N-acetyl-L-glutamate. The protein is Acetylglutamate kinase of Polynucleobacter asymbioticus (strain DSM 18221 / CIP 109841 / QLW-P1DMWA-1) (Polynucleobacter necessarius subsp. asymbioticus).